The primary structure comprises 1311 residues: Cyclin-G-associated kinase (1311 aa).

An N-acetylserine modification is found at Ser2. Phosphoserine is present on residues Ser2 and Ser16. The region spanning 40–314 is the Protein kinase domain; that stretch reads LRVRRVLAEG…SIAEVVHQLQ (275 aa). The Proton acceptor role is filled by Asp173. One can recognise a Phosphatase tensin-type domain in the interval 399 to 566; it reads SVANYAKGDL…EYMCDMVAEE (168 aa). Ser456 is subject to Phosphoserine. Residues 572–710 enclose the C2 tensin-type domain; sequence SKPILVRAVV…FQVNLEVEVE (139 aa). Disordered regions lie at residues 709 to 729 and 749 to 788; these read VEPR…SMRG and FGKP…SADA. Ser770 is subject to Phosphoserine. Over residues 770–788 the composition is skewed to low complexity; it reads SPEAEPTDSDSPPSSSADA. A Phosphothreonine modification is found at Thr776. A Phosphoserine modification is found at Ser783. Thr794 is subject to Phosphothreonine. Disordered stretches follow at residues 801–860, 913–1035, and 1047–1150; these read KEAE…VQQD, CLLG…DLLG, and AVAP…PNYA. Residues Ser811, Ser826, Ser829, Ser834, and Ser939 each carry the phosphoserine modification. Low complexity-rich tracts occupy residues 925–939 and 950–966; these read PPED…LLAS and PRGG…PLLP. 2 stretches are compositionally biased toward polar residues: residues 967-976 and 1070-1080; these read SSGNNSQPCS and SQASWTKSQNP. Position 1096 is a phosphoserine (Ser1096). Residues 1109 to 1124 show a composition bias toward polar residues; sequence TATTPKGSSSWQTSRP. Arg1123 is modified (omega-N-methylarginine). Residues Ser1176 and Ser1185 each carry the phosphoserine modification. The J domain maps to 1247-1311; the sequence is SRWTPVGMAD…FENQGSRPLF (65 aa).

It belongs to the protein kinase superfamily. Ser/Thr protein kinase family. As to expression, ubiquitous. Highest in testis.

It localises to the cytoplasm. Its subcellular location is the perinuclear region. The protein localises to the golgi apparatus. It is found in the trans-Golgi network. The protein resides in the cell junction. It localises to the focal adhesion. Its subcellular location is the cytoplasmic vesicle. The protein localises to the clathrin-coated vesicle. The enzyme catalyses L-seryl-[protein] + ATP = O-phospho-L-seryl-[protein] + ADP + H(+). It carries out the reaction L-threonyl-[protein] + ATP = O-phospho-L-threonyl-[protein] + ADP + H(+). Associates with cyclin G and CDK5. Seems to act as an auxilin homolog that is involved in the uncoating of clathrin-coated vesicles by Hsc70 in non-neuronal cells. Expression oscillates slightly during the cell cycle, peaking at G1. May play a role in clathrin-mediated endocytosis and intracellular trafficking, and in the dynamics of clathrin assembly/disassembly. The chain is Cyclin-G-associated kinase from Homo sapiens (Human).